The sequence spans 751 residues: Catalase-peroxidase (751 aa).

The interval 1–24 is disordered; the sequence is MADKCPFHNQAPKPNVAGSGTQNR. The segment at residues 95–241 is a cross-link (tryptophyl-tyrosyl-methioninium (Trp-Tyr) (with M-267)); it reads WHSAGTYRTF…LAAAHMGLIY (147 aa). H96 (proton acceptor) is an active-site residue. The tryptophyl-tyrosyl-methioninium (Tyr-Met) (with W-95) cross-link spans 241 to 267; sequence YVNPEGPDGNPDPVAAARDIRTTFARM. Position 282 (H282) interacts with heme b.

This sequence belongs to the peroxidase family. Peroxidase/catalase subfamily. Homodimer or homotetramer. It depends on heme b as a cofactor. In terms of processing, formation of the three residue Trp-Tyr-Met cross-link is important for the catalase, but not the peroxidase activity of the enzyme.

The protein resides in the cytoplasm. The catalysed reaction is H2O2 + AH2 = A + 2 H2O. It carries out the reaction 2 H2O2 = O2 + 2 H2O. In terms of biological role, bifunctional enzyme with both catalase and broad-spectrum peroxidase activity. The sequence is that of Catalase-peroxidase from Aspergillus oryzae (strain ATCC 42149 / RIB 40) (Yellow koji mold).